The primary structure comprises 218 residues: Large ribosomal subunit protein bL25 (218 aa).

The tract at residues 187-218 is disordered; that stretch reads SATAAVEEAKEDGAPEESAQGQGAAEAQETNK. The span at 202 to 218 shows a compositional bias: low complexity; that stretch reads EESAQGQGAAEAQETNK.

The protein belongs to the bacterial ribosomal protein bL25 family. CTC subfamily. In terms of assembly, part of the 50S ribosomal subunit; part of the 5S rRNA/L5/L18/L25 subcomplex. Contacts the 5S rRNA. Binds to the 5S rRNA independently of L5 and L18.

Its function is as follows. This is one of the proteins that binds to the 5S RNA in the ribosome where it forms part of the central protuberance. The polypeptide is Large ribosomal subunit protein bL25 (Anaplasma marginale (strain St. Maries)).